A 152-amino-acid polypeptide reads, in one-letter code: Xanthine-guanine phosphoribosyltransferase (152 aa).

5-phospho-alpha-D-ribose 1-diphosphate-binding positions include 37–38, R69, and 88–96; these read RG and DDLVDTGGT. A GMP-binding site is contributed by R69. D89 contacts Mg(2+). 2 residues coordinate guanine: D92 and I135. The xanthine site is built by D92 and I135. GMP-binding positions include 92 to 96 and 134 to 135; these read DTGGT and WI.

The protein belongs to the purine/pyrimidine phosphoribosyltransferase family. XGPT subfamily. Homotetramer. It depends on Mg(2+) as a cofactor.

Its subcellular location is the cell inner membrane. It carries out the reaction GMP + diphosphate = guanine + 5-phospho-alpha-D-ribose 1-diphosphate. It catalyses the reaction XMP + diphosphate = xanthine + 5-phospho-alpha-D-ribose 1-diphosphate. The enzyme catalyses IMP + diphosphate = hypoxanthine + 5-phospho-alpha-D-ribose 1-diphosphate. It functions in the pathway purine metabolism; GMP biosynthesis via salvage pathway; GMP from guanine: step 1/1. It participates in purine metabolism; XMP biosynthesis via salvage pathway; XMP from xanthine: step 1/1. Purine salvage pathway enzyme that catalyzes the transfer of the ribosyl-5-phosphate group from 5-phospho-alpha-D-ribose 1-diphosphate (PRPP) to the N9 position of the 6-oxopurines guanine and xanthine to form the corresponding ribonucleotides GMP (guanosine 5'-monophosphate) and XMP (xanthosine 5'-monophosphate), with the release of PPi. To a lesser extent, also acts on hypoxanthine. This Edwardsiella ictaluri (strain 93-146) protein is Xanthine-guanine phosphoribosyltransferase.